A 380-amino-acid polypeptide reads, in one-letter code: tRNA-specific 2-thiouridylase MnmA (380 aa).

Residues 14-21 and methionine 40 each bind ATP; that span reads GLSGGVDS. Residues 100 to 102 form an interaction with target base in tRNA region; that stretch reads NPD. The Nucleophile role is filled by cysteine 105. Cysteine 105 and cysteine 203 are disulfide-bonded. Glycine 129 provides a ligand contact to ATP. The tract at residues 153–155 is interaction with tRNA; sequence KDQ. Residue cysteine 203 is the Cysteine persulfide intermediate of the active site. Residues 322–323 form an interaction with tRNA region; it reads RY.

It belongs to the MnmA/TRMU family.

The protein localises to the cytoplasm. The catalysed reaction is S-sulfanyl-L-cysteinyl-[protein] + uridine(34) in tRNA + AH2 + ATP = 2-thiouridine(34) in tRNA + L-cysteinyl-[protein] + A + AMP + diphosphate + H(+). Catalyzes the 2-thiolation of uridine at the wobble position (U34) of tRNA, leading to the formation of s(2)U34. The sequence is that of tRNA-specific 2-thiouridylase MnmA from Leptothrix cholodnii (strain ATCC 51168 / LMG 8142 / SP-6) (Leptothrix discophora (strain SP-6)).